Consider the following 325-residue polypeptide: Fatty acid synthase alpha subunit hexA (325 aa).

Mg(2+) is bound at residue Asp-209. Acetyl-CoA is bound by residues 209 to 211, 255 to 265, 279 to 282, and 301 to 303; these read DLV, EAVFKCLHTQT, KSDN, and ISH. A Mg(2+)-binding site is contributed by Ser-302.

Belongs to the thiolase-like superfamily. Fungal fatty acid synthetase subunit alpha family. As to quaternary structure, [Alpha(6)beta(6)] hexamers of two multifunctional subunits (alpha and beta). In terms of processing, 4'-phosphopantetheine is transferred from CoA to a specific serine of the acyl carrier domain by the C-terminal PPT domain. This modification is essential for activity because fatty acids are bound in thioester linkage to the sulfhydryl of the prosthetic group.

The catalysed reaction is acetyl-CoA + n malonyl-CoA + 2n NADPH + 4n H(+) = a long-chain-acyl-CoA + n CoA + n CO2 + 2n NADP(+).. It carries out the reaction a fatty acyl-[ACP] + malonyl-[ACP] + H(+) = a 3-oxoacyl-[ACP] + holo-[ACP] + CO2. It catalyses the reaction a (3R)-hydroxyacyl-[ACP] + NADP(+) = a 3-oxoacyl-[ACP] + NADPH + H(+). It participates in mycotoxin biosynthesis. Its function is as follows. Fatty acid synthase alpha subunit; part of the fragmented gene cluster that mediates the biosynthesis of dothistromin (DOTH), a polyketide toxin very similar in structure to the aflatoxin precursor, versicolorin B. The first step of the pathway is the conversion of acetate to norsolorinic acid (NOR) and requires the fatty acid synthase subunits hexA and hexB, as well as the polyketide synthase pksA. PksA combines a hexanoyl starter unit and 7 malonyl-CoA extender units to synthesize the precursor NOR. The hexanoyl starter unit is provided to the acyl-carrier protein (ACP) domain by the fungal fatty acid synthase hexA/hexB. The second step is the conversion of NOR to averantin (AVN) and requires the norsolorinic acid ketoreductase nor1, which catalyzes the dehydration of norsolorinic acid to form (1'S)-averantin. The cytochrome P450 monooxygenase avnA then catalyzes the hydroxylation of AVN to 5'hydroxyaverantin (HAVN). The next step is performed by adhA that transforms HAVN to averufin (AVF). Averufin might then be converted to hydroxyversicolorone by cypX and avfA. Hydroxyversicolorone is further converted versiconal hemiacetal acetate (VHA) by moxY. VHA is then the substrate for the versiconal hemiacetal acetate esterase est1 to yield versiconal (VAL). Versicolorin B synthase vbsA then converts VAL to versicolorin B (VERB) by closing the bisfuran ring. Then, the activity of the versicolorin B desaturase verB leads to versicolorin A (VERA). DotB, a predicted chloroperoxidase, may perform epoxidation of the A-ring of VERA. Alternatively, a cytochrome P450, such as cypX or avnA could catalyze this step. It is also possible that another, uncharacterized, cytochrome P450 enzyme is responsible for this step. Opening of the epoxide could potentially be achieved by the epoxide hydrolase epoA. However, epoA seems not to be required for DOTH biosynthesis, but other epoxide hydrolases may have the ability to complement this hydrolysis. Alternatively, opening of the epoxide ring could be achieved non-enzymatically. The next step is the deoxygenation of ring A to yield the 5,8-dihydroxyanthraquinone which is most likely catalyzed by the NADPH dehydrogenase encoded by ver1. The last stages of DOTH biosynthesis are proposed to involve hydroxylation of the bisfuran. OrdB and norB might have oxidative roles here. An alternative possibility is that cytochrome P450 monoogenases such as avnA and cypX might perform these steps in addition to previously proposed steps. The protein is Fatty acid synthase alpha subunit hexA of Dothistroma septosporum (Red band needle blight fungus).